Consider the following 359-residue polypeptide: Pyruvate dehydrogenase E1 component subunit beta, mitochondrial (359 aa).

The transit peptide at 1-19 directs the protein to the mitochondrion; that stretch reads MLGVIRNKTIRPSFSAFRF. Glu-82 is a binding site for thiamine diphosphate. Ile-135, Ala-183, Ile-184, and Asp-186 together coordinate K(+).

In terms of assembly, tetramer of 2 alpha and 2 beta subunits. Thiamine diphosphate serves as cofactor.

The protein resides in the mitochondrion matrix. It carries out the reaction N(6)-[(R)-lipoyl]-L-lysyl-[protein] + pyruvate + H(+) = N(6)-[(R)-S(8)-acetyldihydrolipoyl]-L-lysyl-[protein] + CO2. The pyruvate dehydrogenase complex catalyzes the overall conversion of pyruvate to acetyl-CoA and CO(2). It contains multiple copies of three enzymatic components: pyruvate dehydrogenase (E1), dihydrolipoamide acetyltransferase (E2) and lipoamide dehydrogenase (E3). This is Pyruvate dehydrogenase E1 component subunit beta, mitochondrial from Pisum sativum (Garden pea).